The chain runs to 328 residues: MADPSFFVGIVGNVISILVFASPIATFRRIVRSKSTEEFRWLPYVTTLLSTSLWTFYGLHKPGGLLIVTVNGSGAALEAIYVTLYLAYAPRETKAKMVKVVLAVNVGALAAVVAVALVALHGGVRLFVVGVLCAALTIGMYAAPMAAMRTVVKTRSVEYMPFSLSFFLFLNGGVWSVYSLLVKDYFIGIPNAIGFALGTAQLALYMAYRRTKKPAGKGGDDDEDDEEAQGVARLMGHQVEMAQQRRDQQLRKGLSLSLPKPAAPLHGGLDRIIKSFSTTPIELHSILHQHHGGHHHHHRFDTVPDDDDEAVAAGGTTPATTAGPGDRH.

Residues 1–5 lie on the Extracellular side of the membrane; that stretch reads MADPS. A helical membrane pass occupies residues 6 to 26; the sequence is FFVGIVGNVISILVFASPIAT. A MtN3/slv 1 domain is found at 6-92; sequence FFVGIVGNVI…TLYLAYAPRE (87 aa). Over 27-38 the chain is Cytoplasmic; sequence FRRIVRSKSTEE. Residues 39 to 56 traverse the membrane as a helical segment; the sequence is FRWLPYVTTLLSTSLWTF. Over 57-63 the chain is Extracellular; sequence YGLHKPG. A helical transmembrane segment spans residues 64–84; it reads GLLIVTVNGSGAALEAIYVTL. The Cytoplasmic portion of the chain corresponds to 85-99; that stretch reads YLAYAPRETKAKMVK. Residues 100–120 traverse the membrane as a helical segment; it reads VVLAVNVGALAAVVAVALVAL. Residues 121 to 125 lie on the Extracellular side of the membrane; it reads HGGVR. The helical transmembrane segment at 126–146 threads the bilayer; that stretch reads LFVVGVLCAALTIGMYAAPMA. Positions 127–213 constitute a MtN3/slv 2 domain; sequence FVVGVLCAAL…LYMAYRRTKK (87 aa). Residues 147–161 lie on the Cytoplasmic side of the membrane; sequence AMRTVVKTRSVEYMP. Residues 162-182 traverse the membrane as a helical segment; sequence FSLSFFLFLNGGVWSVYSLLV. At 183–185 the chain is on the extracellular side; it reads KDY. Residues 186 to 206 form a helical membrane-spanning segment; it reads FIGIPNAIGFALGTAQLALYM. Residues 207-328 are Cytoplasmic-facing; the sequence is AYRRTKKPAG…ATTAGPGDRH (122 aa). A compositionally biased stretch (basic residues) spans 288-299; that stretch reads HQHHGGHHHHHR. Residues 288 to 328 are disordered; sequence HQHHGGHHHHHRFDTVPDDDDEAVAAGGTTPATTAGPGDRH. Residues 312–328 are compositionally biased toward low complexity; it reads AAGGTTPATTAGPGDRH.

The protein belongs to the SWEET sugar transporter family. Forms homooligomers and/or heterooligomers.

It is found in the cell membrane. Functionally, mediates both low-affinity uptake and efflux of sugar across the plasma membrane. In Oryza sativa subsp. japonica (Rice), this protein is Bidirectional sugar transporter SWEET16 (SWEET16).